The primary structure comprises 378 residues: Small RNA 2'-O-methyltransferase (378 aa).

An S-adenosyl-L-methionine-binding site is contributed by Asp-61. Glu-114, Glu-117, His-118, and His-176 together coordinate Mg(2+).

Belongs to the methyltransferase superfamily. HEN1 family. The cofactor is Mg(2+).

The protein localises to the cytoplasm. It catalyses the reaction small RNA 3'-end nucleotide + S-adenosyl-L-methionine = small RNA 3'-end 2'-O-methylnucleotide + S-adenosyl-L-homocysteine + H(+). Methyltransferase that adds a 2'-O-methyl group at the 3'-end of small RNAs. This chain is Small RNA 2'-O-methyltransferase, found in Schizosaccharomyces pombe (strain 972 / ATCC 24843) (Fission yeast).